A 250-amino-acid polypeptide reads, in one-letter code: Probable aquaporin TIP-type RB7-5A (250 aa).

Helical transmembrane passes span 20–42 and 55–77; these read AYVA…AIAY and GLVA…AANI. The NPA 1 motif lies at 83 to 85; sequence NPA. 3 helical membrane passes run 97 to 119, 140 to 162, and 172 to 194; these read TILT…CLLL, LQGV…ATAA, and IAPI…FSGG. The NPA 2 signature appears at 197–199; sequence NPA. A helical transmembrane segment spans residues 215–237; it reads WIYWAGPLIGGGLAGFIYGDVFI.

This sequence belongs to the MIP/aquaporin (TC 1.A.8) family. TIP (TC 1.A.8.10) subfamily. Roots.

The protein resides in the vacuole membrane. Functionally, channel protein in tonoplast. These proteins may allow the diffusion of amino acids and/or peptides from the vacuolar compartment to the cytoplasm. This Nicotiana tabacum (Common tobacco) protein is Probable aquaporin TIP-type RB7-5A.